Consider the following 322-residue polypeptide: Heterogeneous nuclear ribonucleoprotein D-like (322 aa).

The segment at 1–36 (MTGTARSALPLPQSPARALRPSGAARAAPSLSPSRF) is disordered. At Arg-6 the chain carries Omega-N-methylarginine. Residues 14-36 (SPARALRPSGAARAAPSLSPSRF) show a composition bias toward low complexity. RRM domains follow at residues 51 to 133 (NKMF…KGKE) and 136 to 215 (KKVF…QPKE). Position 64 is an N6-methyllysine (Lys-64). Lys-112 is covalently cross-linked (Glycyl lysine isopeptide (Lys-Gly) (interchain with G-Cter in SUMO2)). Residue Lys-119 is modified to N6-acetyllysine. At Ser-144 the chain carries Phosphoserine. 2 disordered regions span residues 216-251 (VYRQQQQQQKGGRGAAAGGRGGARGRGRGQGQNWNQ) and 299-322 (SGQQSTYGKASRGGGNHQNNYQPY). The span at 226–245 (GGRGAAAGGRGGARGRGRGQ) shows a compositional bias: gly residues. The tract at residues 245–322 (QGQNWNQGFN…GNHQNNYQPY (78 aa)) is necessary for interaction with TNPO1. The residue at position 310 (Arg-310) is a Dimethylated arginine; alternate. Arg-310 is modified (omega-N-methylarginine; alternate).

As to quaternary structure, interacts with TNPO1 and ZNF148. Post-translationally, dimethylation of Arg-310 is probably of the asymmetric type.

The protein resides in the nucleus. It localises to the cytoplasm. Its function is as follows. Acts as a transcriptional regulator. Promotes transcription repression. Promotes transcription activation in differentiated myotubes. Binds to double- and single-stranded DNA sequences. Binds to the transcription suppressor CATR sequence of the COX5B promoter. Binds with high affinity to RNA molecules that contain AU-rich elements (AREs) found within the 3'-UTR of many proto-oncogenes and cytokine mRNAs. Binds both to nuclear and cytoplasmic poly(A) mRNAs. Binds to poly(G) and poly(A), but not to poly(U) or poly(C) RNA homopolymers. Binds to the 5'-ACUAGC-3' RNA consensus sequence. This is Heterogeneous nuclear ribonucleoprotein D-like (Hnrnpdl) from Rattus norvegicus (Rat).